Reading from the N-terminus, the 373-residue chain is tRNA-specific 2-thiouridylase MnmA (373 aa).

Residues 12–19 (GMSGGVDS) and Met-38 each bind ATP. The interaction with target base in tRNA stretch occupies residues 98–100 (NPD). The Nucleophile role is filled by Cys-103. An intrachain disulfide couples Cys-103 to Cys-200. Gly-127 contacts ATP. The interval 150-152 (KDQ) is interaction with tRNA. Cys-200 serves as the catalytic Cysteine persulfide intermediate. Positions 312–313 (RY) are interaction with tRNA.

This sequence belongs to the MnmA/TRMU family.

The protein resides in the cytoplasm. The enzyme catalyses S-sulfanyl-L-cysteinyl-[protein] + uridine(34) in tRNA + AH2 + ATP = 2-thiouridine(34) in tRNA + L-cysteinyl-[protein] + A + AMP + diphosphate + H(+). In terms of biological role, catalyzes the 2-thiolation of uridine at the wobble position (U34) of tRNA, leading to the formation of s(2)U34. This is tRNA-specific 2-thiouridylase MnmA from Streptococcus pneumoniae (strain P1031).